The following is a 262-amino-acid chain: Putative dimethyl sulfoxide reductase iron-sulfur subunit B (262 aa).

4Fe-4S ferredoxin-type domains lie at 4 to 34 (YGLV…MGQF), 62 to 93 (LEMT…TRDD), and 94 to 123 (GIVE…FNWD). [4Fe-4S] cluster contacts are provided by cysteine 13, cysteine 16, cysteine 19, cysteine 23, cysteine 71, cysteine 74, cysteine 79, cysteine 83, cysteine 103, cysteine 106, cysteine 109, cysteine 113, cysteine 147, cysteine 150, cysteine 162, and cysteine 166. The segment at 209 to 262 (NGEMSPGRPWKSKKLESELDDDEAAKAARRRSGSVENGYDVTPHVPAETAGGDD) is disordered.

Probable multiprotein complex that likely consists of DmsA, DmsB and DmsC. [4Fe-4S] cluster serves as cofactor.

It is found in the cell membrane. Its function is as follows. Dimethyl sulfoxide (DMSO) reductase catalyzes the reduction of dimethyl sulfoxide (DMSO) to dimethyl sulfide (DMS) during anaerobic respiration; it can also use trimethylamine N-oxide (TMAO) as terminal electron acceptor. Subunit B is proposed to be involved in electron transfer. This chain is Putative dimethyl sulfoxide reductase iron-sulfur subunit B (dmsB), found in Halobacterium salinarum (strain ATCC 700922 / JCM 11081 / NRC-1) (Halobacterium halobium).